A 220-amino-acid chain; its full sequence is Aspartic protease inhibitor 8 (220 aa).

The signal sequence occupies residues 1 to 23; it reads MMKCLFLLCLCLLPIVVFSSTFT. A propeptide spanning residues 24–32 is cleaved from the precursor; that stretch reads SQNLIDLPS. 2 cysteine pairs are disulfide-bonded: Cys80–Cys125 and Cys174–Cys185.

This sequence belongs to the protease inhibitor I3 (leguminous Kunitz-type inhibitor) family.

The protein resides in the vacuole. Functionally, inhibitor of cathepsin D (aspartic protease) and trypsin (serine protease). May protect the plant by inhibiting proteases of invading organisms. This chain is Aspartic protease inhibitor 8, found in Solanum tuberosum (Potato).